The sequence spans 464 residues: Glutamate--tRNA ligase 1 (464 aa).

The 'HIGH' region signature appears at 8–18 (PSPTGHLHVGG). Residues 231 to 235 (PLSKR) carry the 'KMSKS' region motif. Position 234 (K234) interacts with ATP.

This sequence belongs to the class-I aminoacyl-tRNA synthetase family. Glutamate--tRNA ligase type 1 subfamily. In terms of assembly, monomer.

It localises to the cytoplasm. The enzyme catalyses tRNA(Glu) + L-glutamate + ATP = L-glutamyl-tRNA(Glu) + AMP + diphosphate. Its function is as follows. Catalyzes the attachment of glutamate to tRNA(Glu) in a two-step reaction: glutamate is first activated by ATP to form Glu-AMP and then transferred to the acceptor end of tRNA(Glu). The polypeptide is Glutamate--tRNA ligase 1 (Thermotoga petrophila (strain ATCC BAA-488 / DSM 13995 / JCM 10881 / RKU-1)).